A 615-amino-acid chain; its full sequence is MIQALLVTICLVGFPHQGSSIILESGNVKDYEVVYPQKIPALPKGGIQRAEPETKYEDTMQYQFKVNGEPVVLHLERNKGLFSEDYSETHYSPDGREITTSPPVQDHCYYHGRIQNDADSTASISACNGLKGRFKHQGETYLIEPLKISDSEAHKIYKSENLEKEDEAPKTCGVTQTSLETDETIKMNFQSANNPEEDYVRKRKYIKLAVVVDNSMYIKYDRNLNDIRSRIYEIVNDVNVFYRLLNIHIALIFIEIWSHQDKINVQPMVRVTLDSFGTWRETDLLPRRSHDNAQLYTNVDFDGPTVGYAYVGSLCKPKHSVAIIQDHTETANMMASTVAHELGHNLGMNHDSGNCICQPTLCVMSETLSSVPFNDFSACSRVDHRNYLIRDLPQCILNKPLRTDIVAPAVCGNNFVEVGGECDCGSPQDCQSTCCDAATCRLRDGAQCDTEECCEQCRFRRAGTVCRAAKDDCDVAEFCTGRTADCPMDGLQRNGEPCQHNQGYCYNGKCPIMTNQCIALWGPDATVSQDGCFHFNENGQGDLYCRRENGVNIQCEPQDNKCGRLFCVQSTSTVQCNYRSSATDPDYGMVAIGTKCGDGRVCNNNRFCVDIRIAY.

Residues 1–20 (MIQALLVTICLVGFPHQGSS) form the signal peptide. The propeptide occupies 21 to 195 (IILESGNVKD…KMNFQSANNP (175 aa)). Positions 204–400 (KYIKLAVVVD…DLPQCILNKP (197 aa)) constitute a Peptidase M12B domain. Cystine bridges form between Cys315–Cys395, Cys355–Cys379, and Cys357–Cys362. His340 provides a ligand contact to Zn(2+). Glu341 is an active-site residue. Residues His344 and His350 each contribute to the Zn(2+) site. The Disintegrin domain occupies 408 to 494 (PAVCGNNFVE…DCPMDGLQRN (87 aa)). Ca(2+) is bound by residues Val410, Asn413, Phe415, Glu417, and Asp423. 14 disulfides stabilise this stretch: Cys411–Cys440, Cys422–Cys435, Cys424–Cys430, Cys434–Cys457, Cys448–Cys454, Cys453–Cys479, Cys466–Cys486, Cys473–Cys505, Cys498–Cys510, Cys517–Cys567, Cys532–Cys576, Cys545–Cys555, Cys562–Cys602, and Cys596–Cys608. Residues 472-474 (DCD) carry the D/ECD-tripeptide motif.

This sequence belongs to the venom metalloproteinase (M12B) family. P-III subfamily. P-IIIa sub-subfamily. As to quaternary structure, monomer. Zn(2+) serves as cofactor. Expressed by the venom gland.

It is found in the secreted. Its function is as follows. Snake venom zinc metalloprotease that may induce platelet aggregation. The protein is Zinc metalloproteinase-disintegrin-like of Cerberus rynchops (Dog-faced water snake).